Consider the following 128-residue polypeptide: Aspartate 1-decarboxylase (128 aa).

Serine 25 (schiff-base intermediate with substrate; via pyruvic acid) is an active-site residue. A Pyruvic acid (Ser) modification is found at serine 25. Threonine 57 contributes to the substrate binding site. The active-site Proton donor is tyrosine 58. Position 73-75 (73-75 (GAA)) interacts with substrate.

The protein belongs to the PanD family. As to quaternary structure, heterooctamer of four alpha and four beta subunits. Pyruvate serves as cofactor. Is synthesized initially as an inactive proenzyme, which is activated by self-cleavage at a specific serine bond to produce a beta-subunit with a hydroxyl group at its C-terminus and an alpha-subunit with a pyruvoyl group at its N-terminus.

Its subcellular location is the cytoplasm. The enzyme catalyses L-aspartate + H(+) = beta-alanine + CO2. It functions in the pathway cofactor biosynthesis; (R)-pantothenate biosynthesis; beta-alanine from L-aspartate: step 1/1. Functionally, catalyzes the pyruvoyl-dependent decarboxylation of aspartate to produce beta-alanine. The sequence is that of Aspartate 1-decarboxylase from Caldicellulosiruptor bescii (strain ATCC BAA-1888 / DSM 6725 / KCTC 15123 / Z-1320) (Anaerocellum thermophilum).